We begin with the raw amino-acid sequence, 511 residues long: Bifunctional purine biosynthesis protein PurH (511 aa).

Positions 1–146 constitute an MGS-like domain; it reads MARLALLSVS…KNFAHTTVLT (146 aa).

This sequence belongs to the PurH family.

It catalyses the reaction (6R)-10-formyltetrahydrofolate + 5-amino-1-(5-phospho-beta-D-ribosyl)imidazole-4-carboxamide = 5-formamido-1-(5-phospho-D-ribosyl)imidazole-4-carboxamide + (6S)-5,6,7,8-tetrahydrofolate. The catalysed reaction is IMP + H2O = 5-formamido-1-(5-phospho-D-ribosyl)imidazole-4-carboxamide. The protein operates within purine metabolism; IMP biosynthesis via de novo pathway; 5-formamido-1-(5-phospho-D-ribosyl)imidazole-4-carboxamide from 5-amino-1-(5-phospho-D-ribosyl)imidazole-4-carboxamide (10-formyl THF route): step 1/1. It participates in purine metabolism; IMP biosynthesis via de novo pathway; IMP from 5-formamido-1-(5-phospho-D-ribosyl)imidazole-4-carboxamide: step 1/1. The sequence is that of Bifunctional purine biosynthesis protein PurH from Synechocystis sp. (strain ATCC 27184 / PCC 6803 / Kazusa).